A 127-amino-acid polypeptide reads, in one-letter code: Protein ApaG (127 aa).

The ApaG domain maps to 3 to 127 (EGKKYQINIS…FTLAMPRVLH (125 aa)).

The chain is Protein ApaG from Thiobacillus denitrificans (strain ATCC 25259 / T1).